The following is a 972-amino-acid chain: SWI/SNF-related matrix-associated actin-dependent regulator of chromatin subfamily A containing DEAD/H box 1A (972 aa).

Disordered stretches follow at residues 15–76 (NAVG…SDLQ), 125–177 (DEDS…EKQE), and 217–333 (SSTD…EDSI). Basic and acidic residues-rich tracts occupy residues 22–42 (KSPD…RKAD) and 63–72 (EVVRMGKDSA). Residues 82 to 127 (DMEDKIIKLLEIFPQKSKKDLLEVIENTSTLDGAVAHCLMIYGDED) enclose the CUE 1 domain. Positions 128–138 (SGGRKDKGGRS) are enriched in basic and acidic residues. Over residues 156-169 (SESEDEDSEDEESE) the composition is skewed to acidic residues. The 44-residue stretch at 175-218 (KQEALLKKLKRKLPDIEKEVLRDILKEHDWDYENALGSLLVFSS) folds into the CUE 2 domain. A compositionally biased stretch (basic and acidic residues) spans 237-246 (HSKEKTDKIT). Positions 247–263 (QRPSGSSSLSRWLTAAS) are enriched in polar residues. Low complexity predominate over residues 279 to 290 (KSALSKSTSKNS). Residues 307 to 332 (ASEDEDEIDSDVDSMSDDQDSEDEDS) show a composition bias toward acidic residues. The region spanning 460–628 (ILLHQHKLSG…MSLLNFIMPS (169 aa)) is the Helicase ATP-binding domain. 473 to 480 (DEMGLGKT) provides a ligand contact to ATP. The DEGH box signature appears at 579 to 582 (DEGH). The Helicase C-terminal domain maps to 805 to 966 (LLTKTLAKLK…AITEQMAELL (162 aa)).

Belongs to the SNF2/RAD54 helicase family.

Its subcellular location is the nucleus. The protein localises to the chromosome. It carries out the reaction ATP + H2O = ADP + phosphate + H(+). In terms of biological role, DNA helicase that possesses intrinsic ATP-dependent nucleosome-remodeling activity and is both required for DNA repair and heterochromatin organization. Promotes DNA end resection of double-strand breaks (DSBs) following DNA damage: probably acts by weakening histone DNA interactions in nucleosomes flanking DSBs. Required for the restoration of heterochromatin organization after replication. The chain is SWI/SNF-related matrix-associated actin-dependent regulator of chromatin subfamily A containing DEAD/H box 1A (smarcad1a) from Danio rerio (Zebrafish).